The chain runs to 395 residues: Synaptotagmin-8 (395 aa).

The Extracellular segment spans residues 1–44 (MQADRSMKMGHVSNPLSTSAPVDATAGPNLIPDLITKIPWPRWI). The chain crosses the membrane as a helical; Signal-anchor for type III membrane protein span at residues 45–65 (LFIAILAAGVLLVSCLLCVIC). Residues 66 to 395 (YCCHRQRHRK…PRLPLLRPRS (330 aa)) lie on the Cytoplasmic side of the membrane. C2 domains lie at 113 to 229 (PWGQ…ESWY) and 241 to 370 (QMGE…AQWH).

This sequence belongs to the synaptotagmin family. In terms of assembly, homodimer or homooligomer. Homodimerization and homooligomerization do not depend on Ca(2+). Interacts with SYNCRIP isoform 2 C-terminus. Binds inositol 1,3,4,5-tetrakisphosphate (IP4). Binds to AP2 in a Ca(2+)-independent manner. Interacts with STX1A, STX1B and STX2; the interaction is Ca(2+)-dependent. In terms of tissue distribution, ubiquitous. Strongly expressed in heart, kidney, cerebral cortex, pancreas, and many insulin-secreting cells; lower expression in spleen. Broadly distributed in kidney.

It is found in the cell membrane. It localises to the cytoplasmic vesicle. The protein resides in the secretory vesicle. The protein localises to the acrosome. Involved in the trafficking and exocytosis of secretory vesicles in non-neuronal tissues. Mediates Ca(2+)-regulation of exocytosis acrosomal reaction in sperm. May mediate Ca(2+)-regulation of exocytosis in insulin secreted cells. The sequence is that of Synaptotagmin-8 (Syt8) from Rattus norvegicus (Rat).